Consider the following 1090-residue polypeptide: UPF0507 protein SCRG_01893 (1090 aa).

Positions phenylalanine 289 to asparagine 436 constitute a VPS9 domain.

Belongs to the UPF0507 family.

In Saccharomyces cerevisiae (strain RM11-1a) (Baker's yeast), this protein is UPF0507 protein SCRG_01893.